The primary structure comprises 106 residues: uncharacterized protein (106 aa).

This is an uncharacterized protein from Haemophilus influenzae (strain ATCC 51907 / DSM 11121 / KW20 / Rd).